We begin with the raw amino-acid sequence, 354 residues long: Guanine nucleotide-binding protein G(i) subunit alpha-1 (354 aa).

A lipid anchor (N-myristoyl glycine) is attached at Gly2. Cys3 carries the S-palmitoyl cysteine lipid modification. Positions 32 to 354 constitute a G-alpha domain; that stretch reads REVKLLLLGA…KNNLKDCGLF (323 aa). The G1 motif stretch occupies residues 35-48; the sequence is KLLLLGAGESGKST. GTP-binding positions include 43 to 48, 150 to 151, and 175 to 178; these read ESGKST, DS, and LRTR. Ser47 serves as a coordination point for Mg(2+). Positions 173-181 are G2 motif; the sequence is DVLRTRVKT. Residue Thr181 coordinates Mg(2+). The tract at residues 196–205 is G3 motif; it reads FKMFDVGGQR. GTP contacts are provided by residues 200–204, 269–272, and Ala326; these read DVGGQ and NKKD. The interval 265 to 272 is G4 motif; that stretch reads ILFLNKKD. The interval 324–329 is G5 motif; sequence TCATDT.

Belongs to the G-alpha family. G(i/o/t/z) subfamily. As to quaternary structure, heterotrimeric G proteins are composed of 3 units; alpha, beta and gamma. The alpha chain contains the guanine nucleotide binding site. Part of a spindle orientation complex at least composed of GNAI1, GPSM2 and NUMA1. Identified in complex with the beta subunit GNB1 and the gamma subunit GNG1. Identified in complex with the beta subunit GNB1 and the gamma subunit GNG2. Component of the TAS2R14-GNAI1 complex, consisting of TAS2R14, GNAI1, GNB1 and GNG2; within the complex interacts with TAS2R14; this complex plays a role in the perception of bitterness. GTP binding causes dissociation of the heterotrimer, liberating the individual subunits so that they can interact with downstream effector proteins. Interacts (GDP-bound form) with GPSM1; this inhibits guanine nucleotide exchange and GTP binding. Interacts (GDP-bound form) with GPSM2 (via GoLoco domains); this inhibits guanine nucleotide exchange. Interacts with RGS10; this strongly enhances GTP hydrolysis. Interacts with RGS1 and RGS16; this strongly enhances GTPase activity. Interacts with RGS4. Interacts with RGS12. Interacts (via active GTP- or inactive GDP-bound forms) with RGS14 (via RGS and GoLoco domains). Interacts with RGS3, RGS6, RGS7, RGS8, RGS17, RGS18 and RGS20 (in vitro). Interacts (GDP-bound form) with RIC8A (via C-terminus); promoting GNAI1 folding and association with the plasma membrane. Interacts (inactive GDP-bound form) with NUCB1 (via GBA motif); the interaction leads to activation of GNAI1. Interacts (inactive GDP-bound form) with CCDC88C/DAPLE (via GBA motif); the interaction leads to activation of GNAI1. Interacts (inactive GDP-bound form) with CCDC8A/GIV (via GBA motif). Interacts with GPR15. In terms of processing, myristoylation at Gly-2 is required for membrane anchoring before palmitoylation. Post-translationally, palmitoylation at Cys-3 varies with membrane lipid composition.

The protein localises to the nucleus. Its subcellular location is the cytoplasm. It localises to the cell membrane. The protein resides in the cytoskeleton. It is found in the microtubule organizing center. The protein localises to the centrosome. Its subcellular location is the cell cortex. It localises to the membrane. Functionally, guanine nucleotide-binding proteins (G proteins) function as transducers downstream of G protein-coupled receptors (GPCRs) in numerous signaling cascades. The alpha chain contains the guanine nucleotide binding site and alternates between an active, GTP-bound state and an inactive, GDP-bound state. Signaling by an activated GPCR promotes GDP release and GTP binding. The alpha subunit has a low GTPase activity that converts bound GTP to GDP, thereby terminating the signal. Both GDP release and GTP hydrolysis are modulated by numerous regulatory proteins. Signaling is mediated via effector proteins, such as adenylate cyclase. Inhibits adenylate cyclase activity of ADCY1, ADCY5 and ADCY6, leading to decreased intracellular cAMP levels. The inactive GDP-bound form prevents the association of RGS14 with centrosomes and is required for the translocation of RGS14 from the cytoplasm to the plasma membrane. Required for normal cytokinesis during mitosis. Required for cortical dynein-dynactin complex recruitment during metaphase. The chain is Guanine nucleotide-binding protein G(i) subunit alpha-1 (GNAI1) from Pongo abelii (Sumatran orangutan).